The following is an 81-amino-acid chain: MKTGIHPDYVETTVQCGCGNTFTTRSTKKTGNIVVEVCSQCHPFYTGKQKILDSGGRVARFEKRYGKRGANKAANTDSADK.

Positions 16, 18, 38, and 41 each coordinate Zn(2+).

The protein belongs to the bacterial ribosomal protein bL31 family. Type A subfamily. In terms of assembly, part of the 50S ribosomal subunit. Zn(2+) serves as cofactor.

In terms of biological role, binds the 23S rRNA. The sequence is that of Large ribosomal subunit protein bL31 from Mycobacterium sp. (strain JLS).